The sequence spans 312 residues: Putative olfactory receptor 1F2 (312 aa).

Over 1-25 (MERDKPVSVSEFLLLGLSRQPQQQH) the chain is Extracellular. Residues 26–49 (LLFVFFLSMYLATVLGNLLIILAI) traverse the membrane as a helical segment. The Cytoplasmic segment spans residues 50–57 (SIDSRLHT). A helical transmembrane segment spans residues 58–78 (PMYFFLSNMSFVDNCFSTTVP). At 79 to 99 (KMLANHILRTQTISFSGCLMQ) the chain is on the extracellular side. A disulfide bridge connects residues Cys96 and Cys188. The helical transmembrane segment at 100–119 (MYFISELADMDNFLLAVMAY) threads the bilayer. At 120-138 (DRFVAVCRPLHYTAKMIHQ) the chain is on the cytoplasmic side. A helical membrane pass occupies residues 139 to 157 (LCALLVTGSWVVANSNALL). Topologically, residues 158 to 195 (HTLLMARLSFCADNTIPHIFCDVTPLLKLSCSDTHLSE) are extracellular. The helical transmembrane segment at 196–218 (VMILTEAALVTITPFLCLLASYM) threads the bilayer. At 219–235 (HITCVVLRVPSTKGRWK) the chain is on the cytoplasmic side. Residues 236 to 258 (AFSTCGSHLAVVLLFYGTIMSPY) traverse the membrane as a helical segment. Residues 259–271 (FRTSSSHSAQRDI) are Extracellular-facing. A helical membrane pass occupies residues 272–291 (AAAVRFTVVTPVMNPLIYSL). The Cytoplasmic segment spans residues 292–312 (RNKDIKGALVKVVAVKFFSVQ).

This sequence belongs to the G-protein coupled receptor 1 family.

Its subcellular location is the cell membrane. Its function is as follows. Odorant receptor. The polypeptide is Putative olfactory receptor 1F2 (OR1F2P) (Homo sapiens (Human)).